Reading from the N-terminus, the 129-residue chain is Large ribosomal subunit protein bL20 (129 aa).

Belongs to the bacterial ribosomal protein bL20 family.

Its function is as follows. Binds directly to 23S ribosomal RNA and is necessary for the in vitro assembly process of the 50S ribosomal subunit. It is not involved in the protein synthesizing functions of that subunit. This Mycobacterium sp. (strain JLS) protein is Large ribosomal subunit protein bL20.